The following is a 98-amino-acid chain: Post-transcriptional regulator ComN (98 aa).

Interacts directly with DivIVA.

It is found in the cytoplasm. Functionally, required for post-transcription initiation control of the comE operon. Promotes the accumulation of its target comE mRNA to septal and polar sites. This Bacillus subtilis (strain 168) protein is Post-transcriptional regulator ComN (comN).